The sequence spans 297 residues: N-acetylneuraminate lyase (297 aa).

The aceneuramate site is built by serine 47 and threonine 48. Tyrosine 137 serves as the catalytic Proton donor. The active-site Schiff-base intermediate with substrate is the lysine 165. 5 residues coordinate aceneuramate: threonine 167, glycine 189, aspartate 191, glutamate 192, and serine 208.

Belongs to the DapA family. NanA subfamily. Homotetramer.

The protein localises to the cytoplasm. The enzyme catalyses aceneuramate = aldehydo-N-acetyl-D-mannosamine + pyruvate. It participates in amino-sugar metabolism; N-acetylneuraminate degradation; D-fructose 6-phosphate from N-acetylneuraminate: step 1/5. In terms of biological role, catalyzes the reversible aldol cleavage of N-acetylneuraminic acid (sialic acid; Neu5Ac) to form pyruvate and N-acetylmannosamine (ManNAc) via a Schiff base intermediate. This is N-acetylneuraminate lyase from Shigella boydii serotype 4 (strain Sb227).